The chain runs to 163 residues: Odorant-binding protein 1a (163 aa).

Residues 1-16 form the signal peptide; it reads MAKFLLLALTFGLAHA. 2 disulfides stabilise this stretch: Cys-50–Cys-54 and Cys-69–Cys-161.

Belongs to the calycin superfamily. Lipocalin family. In terms of assembly, may form a heterodimer with OBP1B. In terms of processing, the N-terminus may be blocked. Expressed in nasal mucosa (at protein level). Specifically detected in septal and lateral nasal glands.

Its subcellular location is the secreted. Its function is as follows. Binds the chemical odorant 2-isobutyl-3-methoxypyrazine. This Mus musculus (Mouse) protein is Odorant-binding protein 1a.